We begin with the raw amino-acid sequence, 358 residues long: Peptide chain release factor 2 (358 aa).

The residue at position 242 (Gln-242) is an N5-methylglutamine.

Belongs to the prokaryotic/mitochondrial release factor family. Post-translationally, methylated by PrmC. Methylation increases the termination efficiency of RF2.

The protein resides in the cytoplasm. Its function is as follows. Peptide chain release factor 2 directs the termination of translation in response to the peptide chain termination codons UGA and UAA. The sequence is that of Peptide chain release factor 2 (prfB) from Borreliella burgdorferi (strain ATCC 35210 / DSM 4680 / CIP 102532 / B31) (Borrelia burgdorferi).